Consider the following 560-residue polypeptide: MNIDVVLLLQQNPILLIFVVLAIGLAFGKVRIANMQLGNSIGVLITSLIMGHLGFSFNAEALTIGFMLFIYCVGIEAGPNFFGIFFRDGKHYFTLSMVVLVTAVSISYFASHYMGLDFGLSAGMMAGALTATPVLVGAQDALNSGLATIPRNMEFSLVLENLSVGYAMAYLVGLISMIMFAKLLPRLQKQNLSDSAQQIAQERGLGGSGQRKVYLPIIRAYRVGPELINWTDGKNLRELGIYRQTGCYIERIRRHGILAHPDGDAILQEGDEIALVGFPDSHARLDPSFRNGKEVFDRNLLDLRIVEEEIVVKSDAIAGKRLSDLNLSEYGCFLNRVIRAQIEMPMDLDIVLAKGDILQVSGEKSRVHGLAERIGFISIHSQIADLLAFCSFFILGIMFGLVTMTFGQVSFSLGNAVGLLLSGITLGFLRANHPTFGYVPQGALNMVKDLGLMIFMVGIGLSAGGKMFEHLTQVGPQIIGIAFLVSVVPVFFAYLVGAYVLKMNRALLFGAIIGARTCAPAMDIVNEYAKSTIPALGYAGTYAIANILMTLAGTILIILS.

The next 5 helical transmembrane spans lie at 5–25, 37–57, 66–86, 91–111, and 164–184; these read VVLL…AIGL, LGNS…GFSF, FMLF…GIFF, HYFT…YFAS, and VGYA…AKLL. RCK C-terminal domains are found at residues 203-292 and 293-376; these read RGLG…FRNG and KEVF…RIGF. 6 helical membrane-spanning segments follow: residues 386–406, 409–429, 443–463, 478–498, 506–526, and 539–559; these read LLAF…TMTF, VSFS…LGFL, ALNM…GLSA, IIGI…LVGA, ALLF…DIVN, and AGTY…LIIL.

Belongs to the AAE transporter (TC 2.A.81) family. YbjL subfamily.

Its subcellular location is the cell membrane. The sequence is that of Putative transport protein VV1438 from Vibrio vulnificus (strain YJ016).